Here is an 888-residue protein sequence, read N- to C-terminus: E3 ubiquitin-protein ligase SH3RF1 (888 aa).

Residues 12–53 (CPVCLERLDASAKVLPCQHTFCKRCLLGIVGSRNELRCPECR) form an RING-type zinc finger. 2 consecutive SH3 domains span residues 134–193 (PQLP…IIKP) and 196–259 (QPPP…FNSA). A disordered region spans residues 275–321 (DAGECSSAAAQSSTAPKHSDTKKNTKKRHSFTSLTMANKSSQASQNR). The interaction with RAC1 stretch occupies residues 292–362 (HSDTKKNTKK…APSQVHISTT (71 aa)). Residue Ser304 is modified to Phosphoserine. Residues 305-321 (FTSLTMANKSSQASQNR) show a composition bias toward polar residues. Positions 440 to 543 (HLRPQTRPSV…STAGGPAQKL (104 aa)) are interaction with AKT2. Positions 445–506 (TRPSVYVAIY…PGNYVAPVTR (62 aa)) constitute an SH3 3 domain. 3 disordered regions span residues 516 to 549 (VPMS…NGVA), 617 to 637 (SPAS…APLM), and 693 to 741 (PDSA…ASPT). The span at 520–535 (TAGQTSRGVTMVSPST) shows a compositional bias: polar residues. A Phosphoserine modification is found at Ser532. Residues 693–704 (PDSASLACGNSS) show a composition bias toward polar residues. The segment covering 707 to 718 (KPDKDSKKEKKG) has biased composition (basic and acidic residues). Ser735 is subject to Phosphoserine. Residues 829–888 (VVCERHRVVVSYPPQSEAELELKEGDIVFVHKKREDGWFKGTLQRNGKTGLFPGSFVENI) form the SH3 4 domain.

Belongs to the SH3RF family. As to quaternary structure, interacts with HERP1. Interacts with RAC1; in a GTP-dependent manner. Interacts with MAP3K10/MLK2 and MAP3K11/MLK3. Interacts with MAPK8IP; this interaction leads to the PJAC complex (POSH-JIP or SH3RF1/MAPK8IP apoptotic complex) with a 1:1 ratio. Interacts with SIAH1. Probably part of a signaling complex that may contain SH3RF1, MAPK8IP, DLK1, MAP2K4/MKK4, MAP2K7/MKK7, MAPK8/JNK1, MAPK9/JNK2, AKT1 and AKT2. Found in a complex with RAC2, MAP3K7/TAK1, MAP2K7/MKK7, MAPK8IP1/JIP1, MAPK8/JNK1 and MAPK9/JNK2. Found in a complex with RAC1, MAP3K11/MLK3, MAP2K7/MKK7, MAPK8IP1/JIP1 and MAPK8/JNK1. Interacts with SH3RF2. In terms of processing, phosphorylated at Ser-304 by AKT1 and AKT2. When phosphorylated, it has reduced ability to bind Rac. Autoubiquitinated. Ubiquitinated by SH3RF2, leading to proteasome-mediated degradation.

Its subcellular location is the cytoplasm. The protein localises to the perinuclear region. It is found in the cell projection. It localises to the lamellipodium. The protein resides in the golgi apparatus. Its subcellular location is the trans-Golgi network. The enzyme catalyses S-ubiquitinyl-[E2 ubiquitin-conjugating enzyme]-L-cysteine + [acceptor protein]-L-lysine = [E2 ubiquitin-conjugating enzyme]-L-cysteine + N(6)-ubiquitinyl-[acceptor protein]-L-lysine.. It participates in protein modification; protein ubiquitination. Its function is as follows. Has E3 ubiquitin-protein ligase activity. In the absence of an external substrate, it can catalyze self-ubiquitination. Stimulates ubiquitination of potassium channel KCNJ1, enhancing it's dynamin-dependent and clathrin-independent endocytosis. Acts as a scaffold protein that coordinates with MAPK8IP1/JIP1 in organizing different components of the JNK pathway, including RAC1 or RAC2, MAP3K11/MLK3 or MAP3K7/TAK1, MAP2K7/MKK7, MAPK8/JNK1 and/or MAPK9/JNK2 into a functional multiprotein complex to ensure the effective activation of the JNK signaling pathway. Regulates the differentiation of CD4(+) and CD8(+) T-cells and promotes T-helper 1 (Th1) cell differentiation. Regulates the activation of MAPK8/JNK1 and MAPK9/JNK2 in CD4(+) T-cells and the activation of MAPK8/JNK1 in CD8(+) T-cells. Controls proper cortical neuronal migration and the formation of proximal cytoplasmic dilation in the leading process (PCDLP) in migratory neocortical neurons by regulating the proper localization of activated RAC1 and F-actin assembly. This Pongo abelii (Sumatran orangutan) protein is E3 ubiquitin-protein ligase SH3RF1 (SH3RF1).